The chain runs to 243 residues: Ubiquinone biosynthesis O-methyltransferase (243 aa).

Residues Arg-44, Gly-64, Asp-85, and Met-129 each contribute to the S-adenosyl-L-methionine site.

It belongs to the methyltransferase superfamily. UbiG/COQ3 family.

The enzyme catalyses a 3-demethylubiquinol + S-adenosyl-L-methionine = a ubiquinol + S-adenosyl-L-homocysteine + H(+). It carries out the reaction a 3-(all-trans-polyprenyl)benzene-1,2-diol + S-adenosyl-L-methionine = a 2-methoxy-6-(all-trans-polyprenyl)phenol + S-adenosyl-L-homocysteine + H(+). Its pathway is cofactor biosynthesis; ubiquinone biosynthesis. O-methyltransferase that catalyzes the 2 O-methylation steps in the ubiquinone biosynthetic pathway. The sequence is that of Ubiquinone biosynthesis O-methyltransferase from Erwinia tasmaniensis (strain DSM 17950 / CFBP 7177 / CIP 109463 / NCPPB 4357 / Et1/99).